Consider the following 286-residue polypeptide: Small ribosomal subunit protein uS2 (286 aa).

The interval Glu-213–Ser-286 is disordered. Over residues Ser-227 to Val-241 the composition is skewed to low complexity. Over residues Trp-244–Asn-270 the composition is skewed to polar residues. The segment covering Gly-274 to Ser-286 has biased composition (gly residues).

Belongs to the universal ribosomal protein uS2 family. As to quaternary structure, component of the small ribosomal subunit. Mature ribosomes consist of a small (40S) and a large (60S) subunit. The 40S subunit contains about 33 different proteins and 1 molecule of RNA (18S). The 60S subunit contains about 49 different proteins and 3 molecules of RNA (28S, 5.8S and 5S). Interacts with ribosomal protein S21.

The protein resides in the cytoplasm. Its function is as follows. Required for the assembly and/or stability of the 40S ribosomal subunit. Required for the processing of the 20S rRNA-precursor to mature 18S rRNA in a late step of the maturation of 40S ribosomal subunits. The protein is Small ribosomal subunit protein uS2 of Trichoplax adhaerens (Trichoplax reptans).